Consider the following 205-residue polypeptide: NADH-quinone oxidoreductase subunit J (205 aa).

5 consecutive transmembrane segments (helical) span residues 1-21 (MPIFFYLFTTLIIISSLCVVL), 26-46 (VYSVLWLIFTFINGSGLMILL), 54-74 (LLIVIYVGAVAVLFLFVIMML), 89-109 (LSLSIFITLIMFADLVITIIL), and 142-162 (FMLPFQIAGLILFVAMISCIT).

It belongs to the complex I subunit 6 family.

Its subcellular location is the cell membrane. The enzyme catalyses a quinone + NADH + 5 H(+)(in) = a quinol + NAD(+) + 4 H(+)(out). In terms of biological role, NDH-1 shuttles electrons from NADH, via FMN and iron-sulfur (Fe-S) centers, to quinones in the respiratory chain. Couples the redox reaction to proton translocation (for every two electrons transferred, four hydrogen ions are translocated across the cytoplasmic membrane), and thus conserves the redox energy in a proton gradient. In Rickettsia prowazekii (strain Madrid E), this protein is NADH-quinone oxidoreductase subunit J (nuoJ).